A 589-amino-acid chain; its full sequence is Acyl-CoA ligase SID4 (589 aa).

The PTS2-type peroxisomal targeting signal signature appears at 12-20; that stretch reads RLQQTLNHI. ATP is bound by residues 228–236, 367–372, Asp458, and Arg473; these read TSGSTGNPK and SSYGLT. Thr372 is a substrate binding site. Residues 481–483, Lys547, and 555–557 each bind CoA; these read GGE and FGL. An ATP-binding site is contributed by Lys572.

It belongs to the ATP-dependent AMP-binding enzyme family.

Its subcellular location is the peroxisome. It participates in siderophore biosynthesis. Its function is as follows. Acyl-CoA ligase; part of the gene cluster that mediates the biosynthesis of hydroxamate-containing siderophores that play a critical role in virulence via intracellular iron acquisition during macrophage infection. This Ajellomyces capsulatus (Darling's disease fungus) protein is Acyl-CoA ligase SID4.